A 381-amino-acid chain; its full sequence is Protein RecA (381 aa).

Position 79-86 (79-86 (GPESSGKT)) interacts with ATP.

It belongs to the RecA family.

The protein resides in the cytoplasm. Its function is as follows. Can catalyze the hydrolysis of ATP in the presence of single-stranded DNA, the ATP-dependent uptake of single-stranded DNA by duplex DNA, and the ATP-dependent hybridization of homologous single-stranded DNAs. It interacts with LexA causing its activation and leading to its autocatalytic cleavage. The protein is Protein RecA of Streptococcus parasanguinis.